The chain runs to 194 residues: Lachesicidin (194 aa).

The signal sequence occupies residues 1–22; that stretch reads MQGFFWKTWLVLAVCGTPASLA. The propeptide occupies 23-160; the sequence is HRPLSYGEAL…DEEKDQPKRV (138 aa). 2 disulfides stabilise this stretch: Cys-79/Cys-90 and Cys-101/Cys-118. Acidic residues predominate over residues 125–154; the sequence is EEEEEEEEEEQKAEAENDEEVEKEKEDEEK. The tract at residues 125 to 157 is disordered; it reads EEEEEEEEEEQKAEAENDEEVEKEKEDEEKDQP.

The protein belongs to the cathelicidin family. As to expression, expressed by the venom gland.

Its subcellular location is the secreted. It is found in the target cell membrane. Potent antimicrobial peptide against Gram-negative and Gram-positive bacteria. Adopts an amphipathic alpha helical conformation, that may allow to partition into the target membrane. Low hemolytic activities have been observed on mammalian cells. This chain is Lachesicidin, found in Lachesis muta rhombeata (Bushmaster).